A 202-amino-acid polypeptide reads, in one-letter code: dITP/XTP pyrophosphatase (202 aa).

10-15 (TGNAGK) serves as a coordination point for substrate. Mg(2+) is bound by residues Asp46 and Asp75. Asp75 functions as the Proton acceptor in the catalytic mechanism. Residues Ser76, 160–163 (FGYD), Lys183, and 188–189 (HR) contribute to the substrate site.

Belongs to the HAM1 NTPase family. As to quaternary structure, homodimer. The cofactor is Mg(2+).

It carries out the reaction XTP + H2O = XMP + diphosphate + H(+). The catalysed reaction is dITP + H2O = dIMP + diphosphate + H(+). It catalyses the reaction ITP + H2O = IMP + diphosphate + H(+). Its function is as follows. Pyrophosphatase that catalyzes the hydrolysis of nucleoside triphosphates to their monophosphate derivatives, with a high preference for the non-canonical purine nucleotides XTP (xanthosine triphosphate), dITP (deoxyinosine triphosphate) and ITP. Seems to function as a house-cleaning enzyme that removes non-canonical purine nucleotides from the nucleotide pool, thus preventing their incorporation into DNA/RNA and avoiding chromosomal lesions. In Idiomarina loihiensis (strain ATCC BAA-735 / DSM 15497 / L2-TR), this protein is dITP/XTP pyrophosphatase.